The sequence spans 177 residues: Large ribosomal subunit protein uL6 (177 aa).

The protein belongs to the universal ribosomal protein uL6 family. Part of the 50S ribosomal subunit.

Functionally, this protein binds to the 23S rRNA, and is important in its secondary structure. It is located near the subunit interface in the base of the L7/L12 stalk, and near the tRNA binding site of the peptidyltransferase center. The polypeptide is Large ribosomal subunit protein uL6 (Pasteurella multocida (strain Pm70)).